The sequence spans 287 residues: Acetylglutamate kinase (287 aa).

Substrate-binding positions include 64–65, Arg86, and Asn181; that span reads GG.

This sequence belongs to the acetylglutamate kinase family. ArgB subfamily.

The protein localises to the cytoplasm. It carries out the reaction N-acetyl-L-glutamate + ATP = N-acetyl-L-glutamyl 5-phosphate + ADP. Its pathway is amino-acid biosynthesis; L-arginine biosynthesis; N(2)-acetyl-L-ornithine from L-glutamate: step 2/4. In terms of biological role, catalyzes the ATP-dependent phosphorylation of N-acetyl-L-glutamate. In Desulforamulus reducens (strain ATCC BAA-1160 / DSM 100696 / MI-1) (Desulfotomaculum reducens), this protein is Acetylglutamate kinase.